Here is an 88-residue protein sequence, read N- to C-terminus: ATP synthase F(0) complex subunit f, mitochondrial (88 aa).

Alanine 2 carries the post-translational modification N-acetylalanine. Serine 3 carries the post-translational modification Phosphoserine. Lysine 16 is subject to N6-acetyllysine. Residues 62 to 79 (MVLAAYVFLNYCRSYKEL) form a helical membrane-spanning segment.

As to quaternary structure, component of the ATP synthase complex composed at least of ATP5F1A/subunit alpha, ATP5F1B/subunit beta, ATP5MC1/subunit c (homooctomer), MT-ATP6/subunit a, MT-ATP8/subunit 8, ATP5ME/subunit e, ATP5MF/subunit f, ATP5MG/subunit g, ATP5MK/subunit k, ATP5MJ/subunit j, ATP5F1C/subunit gamma, ATP5F1D/subunit delta, ATP5F1E/subunit epsilon, ATP5PF/subunit F6, ATP5PB/subunit b, ATP5PD/subunit d, ATP5PO/subunit OSCP. ATP synthase complex consists of a soluble F(1) head domain (subunits alpha(3) and beta(3)) - the catalytic core - and a membrane F(0) domain - the membrane proton channel (subunits c, a, 8, e, f, g, k and j). These two domains are linked by a central stalk (subunits gamma, delta, and epsilon) rotating inside the F1 region and a stationary peripheral stalk (subunits F6, b, d, and OSCP).

Its subcellular location is the mitochondrion. It localises to the mitochondrion inner membrane. Its function is as follows. Subunit f, of the mitochondrial membrane ATP synthase complex (F(1)F(0) ATP synthase or Complex V) that produces ATP from ADP in the presence of a proton gradient across the membrane which is generated by electron transport complexes of the respiratory chain. ATP synthase complex consist of a soluble F(1) head domain - the catalytic core - and a membrane F(1) domain - the membrane proton channel. These two domains are linked by a central stalk rotating inside the F(1) region and a stationary peripheral stalk. During catalysis, ATP synthesis in the catalytic domain of F(1) is coupled via a rotary mechanism of the central stalk subunits to proton translocation. In vivo, can only synthesize ATP although its ATP hydrolase activity can be activated artificially in vitro. Part of the complex F(0) domain. This is ATP synthase F(0) complex subunit f, mitochondrial from Bos taurus (Bovine).